The chain runs to 339 residues: Annexin A2 (339 aa).

Ser-2 bears the N-acetylserine mark. The S100A10-binding site stretch occupies residues 2–24 (STVHEILCKLSLEGDHSTPASAY). The residue at position 24 (Tyr-24) is a Phosphotyrosine; by SRC. Ser-26 is modified (phosphoserine; by PKC). 2 Annexin repeats span residues 33-104 (FDAE…GLLK) and 105-176 (TPAQ…ALAK). Lys-49 carries the N6-acetyllysine; alternate modification. Residue Lys-49 forms a Glycyl lysine isopeptide (Lys-Gly) (interchain with G-Cter in SUMO1); alternate linkage. Lys-49 participates in a covalent cross-link: Glycyl lysine isopeptide (Lys-Gly) (interchain with G-Cter in SUMO2); alternate. An N6-acetyllysine modification is found at Lys-152. Phosphoserine is present on Ser-184. Annexin repeat units follow at residues 189-261 (ELID…NLVQ) and 265-336 (NKPL…YLCG). Tyr-199 is subject to Phosphotyrosine. Position 227 is an N6-acetyllysine (Lys-227).

This sequence belongs to the annexin family. In terms of assembly, heterotetramer containing 2 light chains of S100A10/p11 and 2 heavy chains of ANXA2/p36. Interacts with ATP1B1. Interacts with DYSF. Interacts with COCH. Interacts (via repeat Annexin 1) with PCSK9 (via the C-terminal domain); the interaction inhibits the degradation of LDLR. Interacts with CEACAM1 (via the cytoplasmic domain); this interaction is regulated by phosphorylation of CEACAM1. Interacts with APPL2 and APPL1; targets APPL2 to endosomes and acting in parallel to RAB5A. Interacts with S100A4. May interact with UBAP2. Interacts with PLEKHG4B; this interaction is required for PLEKHG4B localization to cell-cell adhesions. (Microbial infection) Interacts with classical swine fever virus envelope glycoprotein E2. ISGylated.

It localises to the secreted. It is found in the extracellular space. The protein localises to the extracellular matrix. The protein resides in the basement membrane. Its subcellular location is the melanosome. Its function is as follows. Calcium-regulated membrane-binding protein whose affinity for calcium is greatly enhanced by anionic phospholipids. It binds two calcium ions with high affinity. May be involved in heat-stress response. Inhibits PCSK9-enhanced LDLR degradation, probably reduces PCSK9 protein levels via a translational mechanism but also competes with LDLR for binding with PCSK9. Binds to endosomes damaged by phagocytosis of particulate wear debris and participates in endosomal membrane stabilization, thereby limiting NLRP3 inflammasome activation. Required for endothelial cell surface plasmin generation and may support fibrinolytic surveillance and neoangiogenesis. In terms of biological role, (Microbial infection) May serve as a receptor for classical swine fever virus (CSFV). Promotes CSFV infection. This is Annexin A2 (ANXA2) from Sus scrofa (Pig).